The following is a 438-amino-acid chain: MADYQGKNVVIIGLGLTGLSCVDFFLARGVTPRVMDTRMTPPGLDKLPEAVERHTGGLNDEWLMAADLIVASPGIALAHPSLSAAADAGIEIVGDIELFCREAQAPIVAITGSNGKSTVTTLVGEMAKAAGVNVGVGGNIGLPALMLLDDECELYVLELSSFQLETTSSLQAVAATILNVTEDHMDRYPFGLQQYRAAKLRIYENAKVCVVNADDALTMPIRGADERCVSFGVNMGDYHLNHQQGETWLRVKGEKVLNVKEMKLSGQHNYTNALAALALADAAGLPRASSLKALTTFTGLPHRFEVVLEHNGVRWVNDSKATNVGSTEAALNGLHVDGTLHLLLGGDGKSADFSPLARYLNGDNVRLYCFGRDGAQLAALRPEVAEQTETMEQAMRLLAPRVQPGDMVLLSPACASLDQFKNFEQRGNEFARLAKELG.

Residue 112–118 participates in ATP binding; that stretch reads GSNGKST.

This sequence belongs to the MurCDEF family.

It localises to the cytoplasm. The catalysed reaction is UDP-N-acetyl-alpha-D-muramoyl-L-alanine + D-glutamate + ATP = UDP-N-acetyl-alpha-D-muramoyl-L-alanyl-D-glutamate + ADP + phosphate + H(+). Its pathway is cell wall biogenesis; peptidoglycan biosynthesis. Functionally, cell wall formation. Catalyzes the addition of glutamate to the nucleotide precursor UDP-N-acetylmuramoyl-L-alanine (UMA). In Escherichia coli O6:K15:H31 (strain 536 / UPEC), this protein is UDP-N-acetylmuramoylalanine--D-glutamate ligase.